A 1258-amino-acid chain; its full sequence is Plasma membrane calcium-transporting ATPase 3 (1258 aa).

Positions 1 to 19 (MGDMANSSIEFHPKPQQQR) are enriched in polar residues. The disordered stretch occupies residues 1–22 (MGDMANSSIEFHPKPQQQREVP). The Cytoplasmic portion of the chain corresponds to 1–97 (MGDMANSSIE…NFIPPKQPKT (97 aa)). Phosphoserine is present on S8. The helical transmembrane segment at 98–118 (FLQLVWEALQDVTLIILEVAA) threads the bilayer. Over 119–155 (IVSLGLSFYAPPGEESEACGNVSGGAEDEGEAEAGWI) the chain is Extracellular. The chain crosses the membrane as a helical span at residues 156–176 (EGAAILLSVICVVLVTAFNDW). The Cytoplasmic segment spans residues 177–364 (SKEKQFRGLQ…KEKSVLQGKL (188 aa)). 2 disordered regions span residues 298-328 (EEEK…GAVA) and 335-354 (KSAE…NVPK). 2 stretches are compositionally biased toward basic and acidic residues: residues 299-308 (EEKKDKKGKQ) and 342-354 (MEER…NVPK). A helical transmembrane segment spans residues 365–384 (TKLAVQIGKAGLVMSAITVI). At 385–417 (ILVLYFVIETFVVDGRVWLAECTPVYVQYFVKF) the chain is on the extracellular side. Residues 418–435 (FIIGVTVLVVAVPEGLPL) traverse the membrane as a helical segment. Topologically, residues 436-849 (AVTISLAYSV…MWGRNVYDSI (414 aa)) are cytoplasmic. Catalysis depends on D473, which acts as the 4-aspartylphosphate intermediate. Positions 794 and 798 each coordinate Mg(2+). A helical transmembrane segment spans residues 850 to 869 (SKFLQFQLTVNVVAVIVAFT). The Extracellular segment spans residues 870 to 879 (GACITQDSPL). Residues 880–900 (KAVQMLWVNLIMDTFASLALA) form a helical membrane-spanning segment. The Cytoplasmic segment spans residues 901–920 (TEPPTESLLLRKPYGRDKPL). Residues 921 to 943 (ISRTMMKNILGHAVYQLTIIFTL) traverse the membrane as a helical segment. The Extracellular portion of the chain corresponds to 944–961 (LFVGELFFDIDSGRNAPL). A helical transmembrane segment spans residues 962–983 (HSPPSEHYTIIFNTFVMMQLFN). Residues 984-1002 (EINARKIHGERNVFDGIFS) lie on the Cytoplasmic side of the membrane. Residues 1003–1024 (NPIFCTIVLGTFGIQIVIVQFG) form a helical membrane-spanning segment. At 1025–1034 (GKPFSCSPLS) the chain is on the extracellular side. The helical transmembrane segment at 1035–1056 (TEQWLWCLFVGVGELVWGQVIA) threads the bilayer. Residues 1057–1258 (TIPTSQLKCL…SPLHSMETSL (202 aa)) lie on the Cytoplasmic side of the membrane. T1079 is modified (phosphothreonine). Positions 1097–1114 (LRRGQILWFRGLNRIQTQ) are calmodulin-binding subdomain A. T1113 bears the Phosphothreonine; by PKC mark. The interval 1115–1124 (MEVVSTFKRS) is calmodulin-binding subdomain B. At S1126 the chain carries Phosphoserine. Positions 1204–1258 (ENEERLRAPPPPPPNQNNNAIDSGIYLTTHATKSATSSAFSSRPGSPLHSMETSL) are disordered. A compositionally biased stretch (low complexity) spans 1231–1245 (TTHATKSATSSAFSS).

Belongs to the cation transport ATPase (P-type) (TC 3.A.3) family. Type IIB subfamily. As to quaternary structure, interacts with PDZD11. Interacts (via N-terminus) with YWHAE. Expressed predominantly in brain and skeletal muscle. Expressed in the molecular layer of the cerebellar cortex, in particular in granule cells (at protein level). Expressed in aldosterone producing glomerulosa cells of adrenal glands (at protein level). Detected at low levels in various tissues including testis, stomach, small intestine, and large intestine. In terms of tissue distribution, most abundant form in brain and most other tissues. As to expression, most abundant form in skeletal muscle and is also found in brain and at low levels in testis and kidney.

It localises to the cell membrane. It is found in the presynaptic cell membrane. It catalyses the reaction Ca(2+)(in) + ATP + H2O = Ca(2+)(out) + ADP + phosphate + H(+). In terms of biological role, ATP-driven Ca(2+) ion pump involved in the maintenance of basal intracellular Ca(2+) levels at the presynaptic terminals. Uses ATP as an energy source to transport cytosolic Ca(2+) ions across the plasma membrane to the extracellular compartment. May counter-transport protons, but the mechanism and the stoichiometry of this Ca(2+)/H(+) exchange remains to be established. In Rattus norvegicus (Rat), this protein is Plasma membrane calcium-transporting ATPase 3 (Atp2b3).